The sequence spans 87 residues: Exodeoxyribonuclease 7 small subunit (87 aa).

The protein belongs to the XseB family. In terms of assembly, heterooligomer composed of large and small subunits.

The protein resides in the cytoplasm. It catalyses the reaction Exonucleolytic cleavage in either 5'- to 3'- or 3'- to 5'-direction to yield nucleoside 5'-phosphates.. In terms of biological role, bidirectionally degrades single-stranded DNA into large acid-insoluble oligonucleotides, which are then degraded further into small acid-soluble oligonucleotides. The protein is Exodeoxyribonuclease 7 small subunit of Solidesulfovibrio magneticus (strain ATCC 700980 / DSM 13731 / RS-1) (Desulfovibrio magneticus).